A 115-amino-acid polypeptide reads, in one-letter code: Tyrosine-protein phosphatase 21 (115 aa).

The Tyrosine-protein phosphatase domain occupies 1–115 (WLMIVEKECR…EIGGDAPMVV (115 aa)). A substrate-binding site is contributed by Asp-83.

Belongs to the protein-tyrosine phosphatase family.

It catalyses the reaction O-phospho-L-tyrosyl-[protein] + H2O = L-tyrosyl-[protein] + phosphate. In Styela plicata (Wrinkled sea squirt), this protein is Tyrosine-protein phosphatase 21 (STY-21).